The chain runs to 80 residues: Large ribosomal subunit protein uL30 (80 aa).

Belongs to the universal ribosomal protein uL30 family. In terms of assembly, part of the 50S ribosomal subunit.

The sequence is that of Large ribosomal subunit protein uL30 from Vesicomyosocius okutanii subsp. Calyptogena okutanii (strain HA).